The sequence spans 765 residues: MRWSSPTSSSLSLVALLLVAHVDAAERATSPPVHPSPPMKGAGVWSAAYASAKELVSQMTLEEMVNITGGFATTENVCAGNTGTVPRLGWPGLCLHDAGNGVRATDLVSAYPSGLHVGASWDKNLTYERGLYMGKEFKAKGVNVLLGPNAGALGRVPVAGRNWEGFTIDPYLSGILNAESIVGHQEAGVIATTKHFIGNEQELYRRPYFGVEAVSSNIDDKTVHELYMWPFMDSVKAGAASAMCSYQRVNNTYACMNSKLMNGLLKGELEFEGFIMLDWNAVHTVDSAEAGLDMVMPRGNWGTNLTAAINNGTTSKERLVDMATRIVAAWYFVGQDGDKFPKPGVGMYNLTQPHTPVEARVSESKPIIMEGAVAGHVLLKNEKNALPLKKPKMLSVYGYDATVPRTKNTDVLFTLGYYSSAEMAQAVLGTEQHFDQAAKGGTIISGGRAGANGPPYISDPLSAIQHRAADDDTWVNWDLDSGNPDVNSGSDACLVFINAIATEGWDRDGLHDDFSDGLVLNVASKCENTIVVIHNAGVRLVDQWVDHPNVTALVMAHLPGQDSGAALVKLLYGEEYFSGKLPYTIPHNESDYGHVYRSCAHDRAQDDKDPQCDFTEGVYIDYRDFDARNVTPRFEFGFGLGYTTFEFSELSIETSENLTAGVGSGSIWDHVAIVHATIKNNGSADGAEVAQLYLGIPNSPPKQLRGFEKVALSPGVSAPVRFELTRRDFSIWDVVAQKWVVQEGSYSVHVGASSRDIRLSDDIKI.

The first 24 residues, 1–24 (MRWSSPTSSSLSLVALLLVAHVDA), serve as a signal peptide directing secretion. N-linked (GlcNAc...) asparagine glycosylation is found at N66, N124, N250, N304, N311, N349, N549, N588, N657, and N681.

It belongs to the glycosyl hydrolase 3 family.

It is found in the secreted. The enzyme catalyses Hydrolysis of terminal, non-reducing beta-D-glucosyl residues with release of beta-D-glucose.. The protein operates within glycan metabolism; cellulose degradation. Its function is as follows. Beta-glucosidases are one of a number of cellulolytic enzymes involved in the degradation of cellulosic biomass. Catalyzes the last step releasing glucose from the inhibitory cellobiose. Shows higher activities on cellobiose and cellotriose but lower activities on laminarioligosaccharides and polymers. The protein is Beta-glucosidase cel3A of Pyricularia oryzae (strain 70-15 / ATCC MYA-4617 / FGSC 8958) (Rice blast fungus).